The primary structure comprises 98 residues: Large ribosomal subunit protein uL23 (98 aa).

It belongs to the universal ribosomal protein uL23 family. In terms of assembly, part of the 50S ribosomal subunit. Contacts protein L29, and trigger factor when it is bound to the ribosome.

In terms of biological role, one of the early assembly proteins it binds 23S rRNA. One of the proteins that surrounds the polypeptide exit tunnel on the outside of the ribosome. Forms the main docking site for trigger factor binding to the ribosome. In Cereibacter sphaeroides (strain ATCC 17025 / ATH 2.4.3) (Rhodobacter sphaeroides), this protein is Large ribosomal subunit protein uL23.